The chain runs to 100 residues: uncharacterized protein (100 aa).

The interval 78–100 (NNGNLDFKGRADERRQPVSNLRM) is disordered. Residues 84–93 (FKGRADERRQ) are compositionally biased toward basic and acidic residues.

This is an uncharacterized protein from Saccharomyces cerevisiae (strain ATCC 204508 / S288c) (Baker's yeast).